The sequence spans 1030 residues: FACT complex subunit spt-16 (1030 aa).

The stretch at 424 to 445 (RLKSNVIKFKEEQENREAEKDN) forms a coiled coil. 2 stretches are compositionally biased toward basic and acidic residues: residues 435-449 (EQENREAEKDNDQKK) and 464-477 (TRNKTTNEELRKER). Disordered stretches follow at residues 435–477 (EQEN…RKER) and 491–514 (ARLSKQGGGTDEKKSKKSNVSYKT). Residues 623–645 (RLIKEMQKRFKTEEAEEREKEGA) are a coiled coil. The disordered stretch occupies residues 927–1030 (VESDNEEAMD…KSGPSHKRRK (104 aa)). Composition is skewed to acidic residues over residues 929–951 (SDNEEAMDDSDDSDAYDPEEEDA) and 958–983 (ESDEDESEGEETESDDDDEGSLDSDE). The stretch at 987–1007 (KDWSDLEEEAANADKRREVEE) forms a coiled coil. Basic and acidic residues predominate over residues 998–1014 (NADKRREVEEPSRDRDR). The span at 1015 to 1030 (KRPHSSKSGPSHKRRK) shows a compositional bias: basic residues.

It belongs to the peptidase M24 family. SPT16 subfamily. Component of the FACT complex, a stable heterodimer of spt-16 and hmg-3 or hmg-4. Expressed in the germline and somatic cells.

The protein localises to the nucleus. Its subcellular location is the chromosome. Functionally, component of the FACT complex, a general chromatin factor that acts to reorganize nucleosomes. The FACT complex is involved in multiple processes that require DNA as a template such as mRNA elongation, DNA replication and DNA repair. During transcription elongation the FACT complex acts as a histone chaperone that both destabilizes and restores nucleosomal structure. It facilitates the passage of RNA polymerase II and transcription by promoting the dissociation of one histone H2A-H2B dimer from the nucleosome, then subsequently promotes the reestablishment of the nucleosome following the passage of RNA polymerase II. In embryos, promotes cell cycle progression and chromosomal segregation. Plays a role in the development of the anterior pharynx during embryonic development. The protein is FACT complex subunit spt-16 of Caenorhabditis elegans.